A 328-amino-acid chain; its full sequence is Malate dehydrogenase (328 aa).

12-18 (GAAGQIG) contacts NAD(+). Positions 92 and 98 each coordinate substrate. Residues N105, Q112, and 129 to 131 (TGN) contribute to the NAD(+) site. 2 residues coordinate substrate: N131 and R162. H187 (proton acceptor) is an active-site residue.

The protein belongs to the LDH/MDH superfamily. MDH type 2 family.

The enzyme catalyses (S)-malate + NAD(+) = oxaloacetate + NADH + H(+). Functionally, catalyzes the reversible oxidation of malate to oxaloacetate. This chain is Malate dehydrogenase, found in Nocardioides sp. (strain ATCC BAA-499 / JS614).